Reading from the N-terminus, the 374-residue chain is Beta-1,3-N-acetylglucosaminyltransferase lunatic fringe (374 aa).

Topologically, residues methionine 1–lysine 8 are cytoplasmic. A helical; Signal-anchor for type II membrane protein transmembrane segment spans residues valine 9 to glutamine 29. Residues histidine 30–tyrosine 374 are Lumenal-facing. Asparagine 40 carries N-linked (GlcNAc...) asparagine glycosylation. A disordered region spans residues arginine 80–proline 100. Arginine 123 is a substrate binding site. Asparagine 162 carries an N-linked (GlcNAc...) asparagine glycan. 2 cysteine pairs are disulfide-bonded: cysteine 163–cysteine 174 and cysteine 192–cysteine 255. Aspartate 196 contributes to the substrate binding site. Aspartate 197 is a Mn(2+) binding site. Residue aspartate 285 is part of the active site. Histidine 309 serves as a coordination point for Mn(2+). Cysteine 359 and cysteine 368 are disulfide-bonded.

Belongs to the glycosyltransferase 31 family. Mn(2+) is required as a cofactor. It depends on Co(2+) as a cofactor. Post-translationally, a soluble form may be derived from the membrane form by proteolytic processing. As to expression, in the embryo, expressed along the A-P axis of the neural tube, within the lateral plate mesoderm, in the presomitic mesoderm and the somites, in specific rhombomeres of the hindbrain (even-numbered rhombomeres) and in the otic vesicles.

It is found in the golgi apparatus membrane. It catalyses the reaction 3-O-(alpha-L-fucosyl)-L-threonyl-[EGF-like domain protein] + UDP-N-acetyl-alpha-D-glucosamine = 3-O-(N-acetyl-beta-D-glucosaminyl-(1-&gt;3)-alpha-L-fucosyl)-L-threonyl-[EGF-like domain protein] + UDP + H(+). It carries out the reaction 3-O-(alpha-L-fucosyl)-L-seryl-[EGF-like domain protein] + UDP-N-acetyl-alpha-D-glucosamine = 3-O-(N-acetyl-beta-D-glucosaminyl-(1-&gt;3)-alpha-L-fucosyl)-L-seryl-[EGF-like domain protein] + UDP + H(+). In terms of biological role, glycosyltransferase that initiates the elongation of O-linked fucose residues attached to EGF-like repeats in the extracellular domain of Notch molecules. Involved in the correct formation of boundaries in the somites and hindbrain. Required for Delta-Notch-mediated induction of hypochord cells at the lateral borders of the midline precursor domain. The chain is Beta-1,3-N-acetylglucosaminyltransferase lunatic fringe (lfng) from Danio rerio (Zebrafish).